Reading from the N-terminus, the 225-residue chain is NAD(P)H-quinone oxidoreductase subunit K, chloroplastic (225 aa).

[4Fe-4S] cluster-binding residues include Cys43, Cys44, Cys108, and Cys139.

It belongs to the complex I 20 kDa subunit family. NDH is composed of at least 16 different subunits, 5 of which are encoded in the nucleus. [4Fe-4S] cluster serves as cofactor.

Its subcellular location is the plastid. It is found in the chloroplast thylakoid membrane. The enzyme catalyses a plastoquinone + NADH + (n+1) H(+)(in) = a plastoquinol + NAD(+) + n H(+)(out). It carries out the reaction a plastoquinone + NADPH + (n+1) H(+)(in) = a plastoquinol + NADP(+) + n H(+)(out). Functionally, NDH shuttles electrons from NAD(P)H:plastoquinone, via FMN and iron-sulfur (Fe-S) centers, to quinones in the photosynthetic chain and possibly in a chloroplast respiratory chain. The immediate electron acceptor for the enzyme in this species is believed to be plastoquinone. Couples the redox reaction to proton translocation, and thus conserves the redox energy in a proton gradient. In Carica papaya (Papaya), this protein is NAD(P)H-quinone oxidoreductase subunit K, chloroplastic.